We begin with the raw amino-acid sequence, 64 residues long: Crotamine CRO3 (64 aa).

The first 22 residues, 1–22 (MILYLLFAFLFLAFLSEPGNAY), serve as a signal peptide directing secretion. Cystine bridges form between Cys25–Cys57, Cys32–Cys51, and Cys39–Cys58.

The protein belongs to the crotamine-myotoxin family. In terms of assembly, monomer. Expressed by the venom gland.

The protein localises to the secreted. Cationic peptide that possesses multiple functions. It acts as a cell-penetrating peptide (CPP), and as a potent voltage-gated potassium channel (Kv) inhibitor. It exhibits antimicrobial activities, hind limb paralysis, and severe muscle necrosis by a non-enzymatic mechanism. The sequence is that of Crotamine CRO3 (CRO3) from Crotalus durissus terrificus (South American rattlesnake).